Reading from the N-terminus, the 407-residue chain is Carbamoyl phosphate synthase small chain (407 aa).

The segment at 1–205 (MTETTPKTAP…LQDGYGEQDA (205 aa)) is CPSase. Residues S60, G257, and G259 each contribute to the L-glutamine site. In terms of domain architecture, Glutamine amidotransferase type-1 spans 209 to 397 (HVVALDFGVK…INLIRERKGQ (189 aa)). C286 (nucleophile) is an active-site residue. L-glutamine is bound by residues L287, Q290, N328, G330, and F331. Catalysis depends on residues H370 and E372.

The protein belongs to the CarA family. In terms of assembly, composed of two chains; the small (or glutamine) chain promotes the hydrolysis of glutamine to ammonia, which is used by the large (or ammonia) chain to synthesize carbamoyl phosphate. Tetramer of heterodimers (alpha,beta)4.

It catalyses the reaction hydrogencarbonate + L-glutamine + 2 ATP + H2O = carbamoyl phosphate + L-glutamate + 2 ADP + phosphate + 2 H(+). The enzyme catalyses L-glutamine + H2O = L-glutamate + NH4(+). The protein operates within amino-acid biosynthesis; L-arginine biosynthesis; carbamoyl phosphate from bicarbonate: step 1/1. It participates in pyrimidine metabolism; UMP biosynthesis via de novo pathway; (S)-dihydroorotate from bicarbonate: step 1/3. Its function is as follows. Small subunit of the glutamine-dependent carbamoyl phosphate synthetase (CPSase). CPSase catalyzes the formation of carbamoyl phosphate from the ammonia moiety of glutamine, carbonate, and phosphate donated by ATP, constituting the first step of 2 biosynthetic pathways, one leading to arginine and/or urea and the other to pyrimidine nucleotides. The small subunit (glutamine amidotransferase) binds and cleaves glutamine to supply the large subunit with the substrate ammonia. This Brucella suis (strain ATCC 23445 / NCTC 10510) protein is Carbamoyl phosphate synthase small chain.